The sequence spans 188 residues: Elongation factor P (188 aa).

The protein belongs to the elongation factor P family.

Its subcellular location is the cytoplasm. It participates in protein biosynthesis; polypeptide chain elongation. In terms of biological role, involved in peptide bond synthesis. Stimulates efficient translation and peptide-bond synthesis on native or reconstituted 70S ribosomes in vitro. Probably functions indirectly by altering the affinity of the ribosome for aminoacyl-tRNA, thus increasing their reactivity as acceptors for peptidyl transferase. This Methylobacterium sp. (strain 4-46) protein is Elongation factor P.